The primary structure comprises 166 residues: MSRTLSKPAGGSLAPWLGVAVIVILFDQLTKIAVAKVFAYGSSHAIAPFFNLVLVYNRGAAFSFLAMAGGWQRWAFTALGVAAAVLICYLLKRHGTQKMFCTALALIMGGAIGNVIDRLLYGHVIDFLDFHVGAWHWPAFNLADSAITIGAALLVFDELRRVRGAR.

Helical transmembrane passes span 9-29 (AGGS…FDQL), 37-57 (VFAY…LVYN), 71-91 (WQRW…CYLL), and 100-120 (FCTA…DRLL). Active-site residues include D126 and D144. The chain crosses the membrane as a helical span at residues 136-156 (HWPAFNLADSAITIGAALLVF).

It belongs to the peptidase A8 family.

It localises to the cell inner membrane. The enzyme catalyses Release of signal peptides from bacterial membrane prolipoproteins. Hydrolyzes -Xaa-Yaa-Zaa-|-(S,diacylglyceryl)Cys-, in which Xaa is hydrophobic (preferably Leu), and Yaa (Ala or Ser) and Zaa (Gly or Ala) have small, neutral side chains.. The protein operates within protein modification; lipoprotein biosynthesis (signal peptide cleavage). In terms of biological role, this protein specifically catalyzes the removal of signal peptides from prolipoproteins. The chain is Lipoprotein signal peptidase from Paraburkholderia phymatum (strain DSM 17167 / CIP 108236 / LMG 21445 / STM815) (Burkholderia phymatum).